The primary structure comprises 264 residues: Major prion protein (264 aa).

Positions 1–24 are cleaved as a signal peptide; it reads MVKSHIGSWILVLFVAMWSDVGLC. Residues 25 to 41 are interaction with ADGRG6; it reads KKRPKPGGGWNTGGSRY. The tract at residues 25 to 241 is interaction with GRB2, ERI3 and SYN1; that stretch reads KKRPKPGGGW…ESQAYYQRGA (217 aa). The interval 28–119 is disordered; that stretch reads PKPGGGWNTG…WNKPSKPKTN (92 aa). 6 repeat units span residues 54-62, 63-70, 71-78, 79-86, 87-94, and 95-103. Positions 54 to 103 are 6 X 8 AA tandem repeats of P-H-G-G-G-W-G-Q; the sequence is PQGGGGWGQPHGGGWGQPHGGGWGQPHGGGWGQPHGGGWGQPHGGGGWGQ. Over residues 55–107 the composition is skewed to gly residues; it reads QGGGGWGQPHGGGWGQPHGGGWGQPHGGGWGQPHGGGWGQPHGGGGWGQGGTH. Cu(2+)-binding residues include His72, Gly73, Gly74, His80, Gly81, Gly82, His88, Gly89, Gly90, His96, Gly98, and Gly99. Cys190 and Cys225 are disulfide-bonded. Residues Asn192 and Asn208 are each glycosylated (N-linked (GlcNAc...) asparagine). Ala241 carries the GPI-anchor amidated alanine lipid modification. A propeptide spans 242–264 (removed in mature form); that stretch reads SVILFSSPPVILLISFLIFLIVG.

This sequence belongs to the prion family. In terms of assembly, monomer and homodimer. Has a tendency to aggregate into amyloid fibrils containing a cross-beta spine, formed by a steric zipper of superposed beta-strands. Soluble oligomers may represent an intermediate stage on the path to fibril formation. Copper binding may promote oligomerization. Interacts with GRB2, APP, ERI3/PRNPIP and SYN1. Mislocalized cytosolically exposed PrP interacts with MGRN1; this interaction alters MGRN1 subcellular location and causes lysosomal enlargement. Interacts with APP. Interacts with KIAA1191. Interacts with ADGRG6.

The protein localises to the cell membrane. It localises to the golgi apparatus. Its primary physiological function is unclear. May play a role in neuronal development and synaptic plasticity. May be required for neuronal myelin sheath maintenance. May promote myelin homeostasis through acting as an agonist for ADGRG6 receptor. May play a role in iron uptake and iron homeostasis. Soluble oligomers are toxic to cultured neuroblastoma cells and induce apoptosis (in vitro). Association with GPC1 (via its heparan sulfate chains) targets PRNP to lipid rafts. Also provides Cu(2+) or Zn(2+) for the ascorbate-mediated GPC1 deaminase degradation of its heparan sulfate side chains. In Bos indicus x Bos taurus (Hybrid cattle), this protein is Major prion protein (PRNP).